The following is a 267-amino-acid chain: MQKQRTILDFQRMKAEGEKIAVLTSYDFPMTGIMDACGIDMILVGDSVGVVVAGYDNTLPVTMEDMIYHTRAVMRARPKAFVVADLPFLSYQTDLKSARLNAGLLVKDGGAAAVKIEGGVNVEETITAITDMDIPVVGHIGLTPQSLHRMGGFKVQGKGEEQAEKLMADALAVERAGAFAVVLEGIPMSLAARITAELSIPTIGIGAGPHCDGQVLVIHDILGLCSKYSPKFVKRYAELAPLIGEACSNYIAEVKGGIFPEERHGFK.

Mg(2+) contacts are provided by Asp-46 and Asp-85. Residues 46 to 47 (DS), Asp-85, and Lys-115 each bind 3-methyl-2-oxobutanoate. Glu-117 is a binding site for Mg(2+). Glu-184 acts as the Proton acceptor in catalysis.

It belongs to the PanB family. Homodecamer; pentamer of dimers. The cofactor is Mg(2+).

Its subcellular location is the cytoplasm. The catalysed reaction is 3-methyl-2-oxobutanoate + (6R)-5,10-methylene-5,6,7,8-tetrahydrofolate + H2O = 2-dehydropantoate + (6S)-5,6,7,8-tetrahydrofolate. Its pathway is cofactor biosynthesis; (R)-pantothenate biosynthesis; (R)-pantoate from 3-methyl-2-oxobutanoate: step 1/2. Functionally, catalyzes the reversible reaction in which hydroxymethyl group from 5,10-methylenetetrahydrofolate is transferred onto alpha-ketoisovalerate to form ketopantoate. The protein is 3-methyl-2-oxobutanoate hydroxymethyltransferase of Citrifermentans bemidjiense (strain ATCC BAA-1014 / DSM 16622 / JCM 12645 / Bem) (Geobacter bemidjiensis).